Reading from the N-terminus, the 664-residue chain is DNA topoisomerase 4 subunit B (664 aa).

Residues Y7, N47, D74, G114–A120, and K341 contribute to the ATP site. The interval R386–S418 is disordered. Positions E387–S398 are enriched in basic and acidic residues. In terms of domain architecture, Toprim spans N424 to P538. Residues E430, D503, and D505 each coordinate Mg(2+).

The protein belongs to the type II topoisomerase family. ParE type 2 subfamily. Heterotetramer composed of ParC and ParE. It depends on Mg(2+) as a cofactor. The cofactor is Mn(2+). Ca(2+) is required as a cofactor.

The enzyme catalyses ATP-dependent breakage, passage and rejoining of double-stranded DNA.. Its function is as follows. Topoisomerase IV is essential for chromosome segregation. It relaxes supercoiled DNA. Performs the decatenation events required during the replication of a circular DNA molecule. This is DNA topoisomerase 4 subunit B from Staphylococcus epidermidis (strain ATCC 35984 / DSM 28319 / BCRC 17069 / CCUG 31568 / BM 3577 / RP62A).